The following is a 349-amino-acid chain: S-adenosylmethionine:tRNA ribosyltransferase-isomerase (349 aa).

This sequence belongs to the QueA family. In terms of assembly, monomer.

The protein localises to the cytoplasm. The catalysed reaction is 7-aminomethyl-7-carbaguanosine(34) in tRNA + S-adenosyl-L-methionine = epoxyqueuosine(34) in tRNA + adenine + L-methionine + 2 H(+). The protein operates within tRNA modification; tRNA-queuosine biosynthesis. Transfers and isomerizes the ribose moiety from AdoMet to the 7-aminomethyl group of 7-deazaguanine (preQ1-tRNA) to give epoxyqueuosine (oQ-tRNA). The sequence is that of S-adenosylmethionine:tRNA ribosyltransferase-isomerase from Flavobacterium psychrophilum (strain ATCC 49511 / DSM 21280 / CIP 103535 / JIP02/86).